The chain runs to 604 residues: Ribosome-inactivating protein PMRIPm (604 aa).

An N-terminal signal peptide occupies residues 1-43; that stretch reads MRVVAAILYINVVVALICGLGIQGGALDLQDYPSVSFQGDAMQ. The active site involves Glu-211. 3 disulfides stabilise this stretch: Cys-301–Cys-332, Cys-348–Cys-367, and Cys-392–Cys-409. 2 Ricin B-type lectin domains span residues 335–463 and 466–598; these read GEPT…WRVG and VEPI…WLTV. The stretch at 345–387 is one 1-alpha repeat; that stretch reads AGWCVDVKDGRDNDGNPIQVLSCGDGQERKQQWTFHRDGTIRS. Residues 389 to 429 form a 1-beta repeat; sequence LGKCMTAYGFKHGEYVMIYDCDTAIAGANKWVVSIDGTITN. A 1-gamma repeat occupies 432–465; it reads SGLVLTAPRGATGTTLLVEKNVHAARQCWRVGDD. The stretch at 477-521 is one 2-alpha repeat; sequence QEKCLEANYLENTNVSRYTKVFLDDCVLDRQQQRWALYSDGTIRA. A disulfide bond links Cys-480 and Cys-502. N-linked (GlcNAc...) asparagine glycosylation is present at Asn-490. Residues 525–563 form a 2-beta repeat; the sequence is RSLRVTADGHRSLDSIIILACKGWGNQRWVFNTDGTILN. A 2-gamma repeat occupies 566-599; sequence AKLVMDVKDSDVSLLQIILHQSTGKPNQKWLTVT.

This sequence belongs to the ribosome-inactivating protein family. Type 2 RIP subfamily. In terms of assembly, disulfide-linked dimer of A and B chains. The precursor is processed in two chains, A and B, that are linked by a disulfide bond. In terms of processing, glycosylated. Post-translationally, the N-terminus is blocked. As to expression, expressed in rhizome and abundantly in leaves (at protein level).

The enzyme catalyses Endohydrolysis of the N-glycosidic bond at one specific adenosine on the 28S rRNA.. Strongly inhibited by asialofetuin and asialomucin. In terms of biological role, gal/GalNAc-specific agglutinin. Behaves as a type-2 ribosome-inactivating protein. Inhibits mammalian ribosomes. The A chain is responsible for inhibiting protein synthesis through the catalytic inactivation of 60S ribosomal subunits by removing adenine from position 4,324 of 28S rRNA. The B chain binds to cell receptors and probably facilitates the entry into the cell of the A chain; B chains are also responsible for cell agglutination (lectin activity). Involved in plant defense against insects. Has very low cytotoxic activity against the human tumor cell line Molt4, but higher against CEM. This chain is Ribosome-inactivating protein PMRIPm, found in Polygonatum multiflorum (Solomon's seal).